The primary structure comprises 211 residues: Protein DEHYDRATION-INDUCED 19 homolog 7 (211 aa).

The residue at position 113 (threonine 113) is a Phosphothreonine. The disordered stretch occupies residues 163 to 194; sequence GDSVAQVSPKDTSKSKIQQESFSNEDQEKAKK. A compositionally biased stretch (polar residues) spans 167–186; it reads AQVSPKDTSKSKIQQESFSN.

It belongs to the Di19 family. In terms of processing, not phosphorylated in vitro by CPK3 or CPK11. As to expression, expressed in seedlings, roots, leaves, stems, flowers and siliques.

The protein localises to the nucleus. In terms of biological role, involved in both red and blue light signaling. This Arabidopsis thaliana (Mouse-ear cress) protein is Protein DEHYDRATION-INDUCED 19 homolog 7 (DI19-7).